The chain runs to 177 residues: Adenine phosphoribosyltransferase (177 aa).

This sequence belongs to the purine/pyrimidine phosphoribosyltransferase family. As to quaternary structure, homodimer.

The protein localises to the cytoplasm. It catalyses the reaction AMP + diphosphate = 5-phospho-alpha-D-ribose 1-diphosphate + adenine. Its pathway is purine metabolism; AMP biosynthesis via salvage pathway; AMP from adenine: step 1/1. Catalyzes a salvage reaction resulting in the formation of AMP, that is energically less costly than de novo synthesis. This chain is Adenine phosphoribosyltransferase, found in Acidothermus cellulolyticus (strain ATCC 43068 / DSM 8971 / 11B).